The chain runs to 173 residues: MSDNPTPESTPEAETPEVEKPMEPQGKVFDEAYVQSLRQEAAAARVAKKDAVEAAEARVKAEYEAKLAERDTAYTELQNQLGQAWIELEKVYLSLDAKVPNDKVRAFVEILEGNDRDSIAESVKSRLELVGGFGNKTPSPAFDPSQGRGGKPPIPLNGDPILEAIKAAVGIKK.

Positions 1–13 (MSDNPTPESTPEA) are enriched in low complexity. The disordered stretch occupies residues 1–27 (MSDNPTPESTPEAETPEVEKPMEPQGK). A coiled-coil region spans residues 36–84 (SLRQEAAAARVAKKDAVEAAEARVKAEYEAKLAERDTAYTELQNQLGQA). The interval 134–158 (GNKTPSPAFDPSQGRGGKPPIPLNG) is disordered.

The protein belongs to the L5likevirus scaffolding protein family.

Scaffolding protein involved in the icosahedric procapsid assembly. Coassembles with the capsid proteins to form the procapsid, in which the scaffolding protein is found within the external shell of icosahedrally arranged capsid protein subunits. This Mycobacterium (Mycobacteriophage L5) protein is Probable capsid assembly scaffolding protein (16).